The chain runs to 181 residues: Probable inactive acireductone dioxygenase 2 (181 aa).

It belongs to the acireductone dioxygenase (ARD) family.

It localises to the cytoplasm. It is found in the nucleus. In terms of biological role, probable inactive acireductone dioxygenase. The polypeptide is Probable inactive acireductone dioxygenase 2 (Sorghum bicolor (Sorghum)).